A 303-amino-acid polypeptide reads, in one-letter code: Cyclin-dependent kinase 4 (303 aa).

N-acetylalanine is present on A2. In terms of domain architecture, Protein kinase spans 6–295 (YEPVAEIGVG…AFRALQHSYL (290 aa)). ATP contacts are provided by residues 12–20 (IGVGAYGTV) and K35. A required for binding D-type cyclins region spans residues 50–56 (PVSTVRE). The active-site Proton acceptor is D140. A Phosphothreonine; by CAK modification is found at T172. Position 300 is a phosphoserine (S300).

Belongs to the protein kinase superfamily. CMGC Ser/Thr protein kinase family. CDC2/CDKX subfamily. In terms of assembly, component of the D-CDK4 complex, composed of CDK4 and some D-type G1 cyclin (CCND1, CCND2 or CCND3). Interacts directly in the complex with CCND1, CCND2 or CCND3. Interacts with SEI1 and ZNF655. Forms a ternary complex, cyclin D-CDK4-CDKN1B, involved in modulating CDK4 enzymatic activity. Interacts directly with CDKN1B (phosphorylated on 'Tyr-88' and 'Tyr-89'); the interaction allows assembly of the cyclin D-CDK4 complex, Thr-172 phosphorylation, nuclear translocation and enhances the cyclin D-CDK4 complex activity. CDK4 activity is either inhibited or enhanced depending on stoichiometry of complex. The non-tyrosine-phosphorylated form of CDKN1B prevents T-loop phosphorylation of CDK4 producing inactive CDK4. Interacts (unphosphorylated form) with CDK2. Also forms ternary complexes with CDKN1A or CDKN2A. Interacts directly with CDKN1A (via its N-terminal); the interaction promotes the assembly of the cyclin D-CDK4 complex, its nuclear translocation and promotes the cyclin D-dependent enzyme activity of CDK4. Interacts with CCND1; the interaction is prevented with the binding of CCND1 to INSM1 during cell cycle progression. Probably forms a complex composed of chaperones HSP90 and HSP70, co-chaperones CDC37, PPP5C, TSC1 and client protein TSC2, CDK4, AKT, RAF1 and NR3C1; this complex does not contain co-chaperones STIP1/HOP and PTGES3/p23. Interacts with CEBPA (when phosphorylated). Interacts with FNIP1 and FNIP2. Expressed in fetal and adult lung. Also expressed in brain, heart, liver, skeletal muscle and testes.

It is found in the cytoplasm. It localises to the nucleus. Its subcellular location is the nucleus membrane. The catalysed reaction is L-seryl-[protein] + ATP = O-phospho-L-seryl-[protein] + ADP + H(+). The enzyme catalyses L-threonyl-[protein] + ATP = O-phospho-L-threonyl-[protein] + ADP + H(+). With respect to regulation, both phosphorylation at Thr-172 and binding of a D-type cyclin are necessary for enzymatic activity. Full activation of the cyclin-D-CDK4 complex appears to require other factors such as recruitment of the substrate via a substrate recruitment motif, and/or formation of the CDKN1B ternary complex. Inhibited by INK4 family members. In resting cells, the non-tyrosine-phosphorylated form of CDKN1B prevents phosphorylation at Thr-172 and inactivation, while, in proliferating cells, tyrosine phosphorylation of CDKN1B allows phosphorylation of Thr-172 of CDK4 and subsequent activation. Its function is as follows. Ser/Thr-kinase component of cyclin D-CDK4 (DC) complexes that phosphorylate and inhibit members of the retinoblastoma (RB) protein family including RB1 and regulate the cell-cycle during G(1)/S transition. Phosphorylation of RB1 allows dissociation of the transcription factor E2F from the RB/E2F complexes and the subsequent transcription of E2F target genes which are responsible for the progression through the G(1) phase. Hypophosphorylates RB1 in early G(1) phase. Cyclin D-CDK4 complexes are major integrators of various mitogenenic and antimitogenic signals. Also phosphorylates SMAD3 in a cell-cycle-dependent manner and represses its transcriptional activity. Component of the ternary complex, cyclin D/CDK4/CDKN1B, required for nuclear translocation and activity of the cyclin D-CDK4 complex. The polypeptide is Cyclin-dependent kinase 4 (Cdk4) (Rattus norvegicus (Rat)).